The following is a 448-amino-acid chain: Histidinol dehydrogenase (448 aa).

3 residues coordinate NAD(+): Tyr136, Gln197, and Asn220. Residues Ser243, Gln265, and His268 each coordinate substrate. Residues Gln265 and His268 each contribute to the Zn(2+) site. Residues Glu333 and His334 each act as proton acceptor in the active site. His334, Asp367, Glu421, and His426 together coordinate substrate. Asp367 contacts Zn(2+). His426 provides a ligand contact to Zn(2+).

It belongs to the histidinol dehydrogenase family. It depends on Zn(2+) as a cofactor.

The catalysed reaction is L-histidinol + 2 NAD(+) + H2O = L-histidine + 2 NADH + 3 H(+). It participates in amino-acid biosynthesis; L-histidine biosynthesis; L-histidine from 5-phospho-alpha-D-ribose 1-diphosphate: step 9/9. Its function is as follows. Catalyzes the sequential NAD-dependent oxidations of L-histidinol to L-histidinaldehyde and then to L-histidine. This is Histidinol dehydrogenase from Pseudomonas syringae pv. syringae (strain B728a).